We begin with the raw amino-acid sequence, 165 residues long: uncharacterized protein (165 aa).

Residues 68–107 form a disordered region; it reads LEGAPEWAAPHPEEQRRSPPACSQHTPPLPSTPTGPPPCS. Residues 94-107 are compositionally biased toward pro residues; the sequence is PPLPSTPTGPPPCS.

This is an uncharacterized protein from Homo sapiens (Human).